Reading from the N-terminus, the 171-residue chain is Ribosome maturation factor RimM (171 aa).

The PRC barrel domain maps to 96-170 (AEGEYYYHEI…LVTIHVTEGL (75 aa)).

The protein belongs to the RimM family. Binds ribosomal protein uS19.

Its subcellular location is the cytoplasm. An accessory protein needed during the final step in the assembly of 30S ribosomal subunit, possibly for assembly of the head region. Essential for efficient processing of 16S rRNA. May be needed both before and after RbfA during the maturation of 16S rRNA. It has affinity for free ribosomal 30S subunits but not for 70S ribosomes. The sequence is that of Ribosome maturation factor RimM from Bacillus anthracis (strain A0248).